Consider the following 251-residue polypeptide: Isopentenyl-diphosphate delta-isomerase (251 aa).

K49 lines the substrate pocket. Residues H53 and H66 each coordinate Mg(2+). A Nudix hydrolase domain is found at 64 to 212; that stretch reads LLHRAFSVFL…SNSFTPWFKL (149 aa). Substrate contacts are provided by R86 and K90. Residue C102 is part of the active site. S103 contacts substrate. Positions 162 and 164 each coordinate Mg(2+). E164 is an active-site residue.

The protein belongs to the IPP isomerase type 1 family. The cofactor is Mg(2+).

It is found in the cytoplasm. It catalyses the reaction isopentenyl diphosphate = dimethylallyl diphosphate. It functions in the pathway isoprenoid biosynthesis; dimethylallyl diphosphate biosynthesis; dimethylallyl diphosphate from isopentenyl diphosphate: step 1/1. Functionally, isopentenyl-diphosphate delta-isomerase; part of the second module of ergosterol biosynthesis pathway that includes the middle steps of the pathway. The second module is carried out in the vacuole and involves the formation of farnesyl diphosphate, which is also an important intermediate in the biosynthesis of ubiquinone, dolichol, heme and prenylated proteins. Activity by the mevalonate kinase first converts mevalonate into 5-phosphomevalonate. 5-phosphomevalonate is then further converted to 5-diphosphomevalonate by the phosphomevalonate kinase. The diphosphomevalonate decarboxylase then produces isopentenyl diphosphate. The isopentenyl-diphosphate delta-isomerase then catalyzes the 1,3-allylic rearrangement of the homoallylic substrate isopentenyl (IPP) to its highly electrophilic allylic isomer, dimethylallyl diphosphate (DMAPP). Finally the farnesyl diphosphate synthase catalyzes the sequential condensation of isopentenyl pyrophosphate with dimethylallyl pyrophosphate, and then with the resultant geranylpyrophosphate to the ultimate product farnesyl pyrophosphate. This Phaffia rhodozyma (Yeast) protein is Isopentenyl-diphosphate delta-isomerase.